We begin with the raw amino-acid sequence, 307 residues long: Reaction center protein M chain (307 aa).

The next 3 membrane-spanning stretches (helical) occupy residues 52–78 (LGIAGTVSLAFGAAWFFTIGVWYWYQA), 110–139 (QGGVWQIASLFMAISVIAWWVRVYTRADQL), and 142–167 (GKHMAWAFLSAIWLWSVLGFWRPILM). (7R,8Z)-bacteriochlorophyll b contacts are provided by H181 and H201. Residues 197-225 (YNPFHGLSIAALYGSALLFAMHGATILAV) traverse the membrane as a helical segment. Residues H218 and E233 each coordinate Fe cation. A ubiquinone is bound at residue W251. The chain crosses the membrane as a helical span at residues 259–285 (ATMEGIHRWAIWMAVMVTLTGGIGILL). Residue H265 coordinates Fe cation.

This sequence belongs to the reaction center PufL/M/PsbA/D family. As to quaternary structure, reaction center is composed of four bacteriochlorophylls, two bacteriopheophytins, two ubiquinones, one iron, and three highly hydrophobic polypeptide chains (designated L, M, and H).

Its subcellular location is the cellular chromatophore membrane. The reaction center is a membrane-bound complex that mediates the initial photochemical event in the electron transfer process of photosynthesis. The polypeptide is Reaction center protein M chain (pufM) (Rhodobacter capsulatus (Rhodopseudomonas capsulata)).